The sequence spans 303 residues: 5-dehydro-4-deoxyglucarate dehydratase (303 aa).

Belongs to the DapA family.

It catalyses the reaction 5-dehydro-4-deoxy-D-glucarate + H(+) = 2,5-dioxopentanoate + CO2 + H2O. It functions in the pathway carbohydrate acid metabolism; D-glucarate degradation; 2,5-dioxopentanoate from D-glucarate: step 2/2. This Pseudomonas putida (Arthrobacter siderocapsulatus) protein is 5-dehydro-4-deoxyglucarate dehydratase.